The chain runs to 602 residues: Cholinesterase (602 aa).

An N-terminal signal peptide occupies residues 1 to 28 (MQSKGTIISIQFLLRFLLLWVLIGKSHT). N-linked (GlcNAc...) asparagine glycosylation is present at Asn-85. Cys-93 and Cys-120 are joined by a disulfide. The N-linked (GlcNAc...) asparagine glycan is linked to Asn-134. 144-145 (GG) provides a ligand contact to substrate. Ser-226 (acyl-ester intermediate) is an active-site residue. The residue at position 226 (Ser-226) is a Phosphoserine. Asn-269 and Asn-284 each carry an N-linked (GlcNAc...) asparagine glycan. Cys-280 and Cys-291 are joined by a disulfide. The active-site Charge relay system is the Glu-353. Residue Asn-369 is glycosylated (N-linked (GlcNAc...) asparagine). A disulfide bridge connects residues Cys-428 and Cys-547. The active-site Charge relay system is the His-466. 4 N-linked (GlcNAc...) asparagine glycosylation sites follow: Asn-483, Asn-509, Asn-513, and Asn-514.

It belongs to the type-B carboxylesterase/lipase family. Homotetramer; disulfide-linked. Dimer of dimers.

It localises to the secreted. It catalyses the reaction an acylcholine + H2O = a carboxylate + choline + H(+). Esterase with broad substrate specificity. Contributes to the inactivation of the neurotransmitter acetylcholine. Can degrade neurotoxic organophosphate esters. This Panthera tigris tigris (Bengal tiger) protein is Cholinesterase (BCHE).